A 498-amino-acid chain; its full sequence is Nucleobase transporter PlAzg2 (498 aa).

The next 13 helical transmembrane spans lie at 88–108, 118–138, 142–162, 169–189, 203–223, 236–256, 259–279, 312–332, 357–377, 388–408, 412–432, 443–463, and 478–498; these read LLAG…NSSI, AGII…GLWG, LVIV…VQGM, ALAA…TSLV, AISV…GGVI, FADP…ILYI, VPGN…LFKA, TLVI…VGLI, ILSG…AAGI, IATG…TLVP, VAPI…HISF, FIIA…IGFI, and VKPL…LQTM.

Belongs to the nucleobase:cation symporter-2 (NCS2) (TC 2.A.40) family. Azg-like subfamily.

The protein resides in the cell membrane. With respect to regulation, inhibited by the proton gradient disruptor carbonyl cyanide m-chlorophenylhydrazone (CCCP), but not by the sodium gradient disruptor ouabain. Functionally, transports adenine, guanine, hypoxanthine, xanthine, cytosine and uracil. Transport is probably proton-dependent. The protein is Nucleobase transporter PlAzg2 of Paenibacillus larvae subsp. larvae (strain NRRL B-3650 / LMG 16245).